Consider the following 425-residue polypeptide: Putative type I restriction enzyme MjaX specificity subunit (425 aa).

Belongs to the type-I restriction system S methylase family.

A putative specificity (S) subunit of a type I restriction enzyme thought to recognize 5'-TAGN(6)TGC-3'; the other subunits are unknown. The sequence is that of Putative type I restriction enzyme MjaX specificity subunit from Methanocaldococcus jannaschii (strain ATCC 43067 / DSM 2661 / JAL-1 / JCM 10045 / NBRC 100440) (Methanococcus jannaschii).